The chain runs to 86 residues: Protein U17 (86 aa).

This Homo sapiens (Human) protein is Protein U17 (U17/U16).